The primary structure comprises 37 residues: Large ribosomal subunit protein bL36c (37 aa).

It belongs to the bacterial ribosomal protein bL36 family.

It is found in the plastid. Its subcellular location is the chloroplast. This Mesembryanthemum crystallinum (Common ice plant) protein is Large ribosomal subunit protein bL36c.